A 290-amino-acid polypeptide reads, in one-letter code: Bifunctional protein FolD 3 (290 aa).

NADP(+) is bound by residues 163–165 (GHS) and I229.

The protein belongs to the tetrahydrofolate dehydrogenase/cyclohydrolase family. Homodimer.

The enzyme catalyses (6R)-5,10-methylene-5,6,7,8-tetrahydrofolate + NADP(+) = (6R)-5,10-methenyltetrahydrofolate + NADPH. It carries out the reaction (6R)-5,10-methenyltetrahydrofolate + H2O = (6R)-10-formyltetrahydrofolate + H(+). It participates in one-carbon metabolism; tetrahydrofolate interconversion. In terms of biological role, catalyzes the oxidation of 5,10-methylenetetrahydrofolate to 5,10-methenyltetrahydrofolate and then the hydrolysis of 5,10-methenyltetrahydrofolate to 10-formyltetrahydrofolate. This Roseobacter denitrificans (strain ATCC 33942 / OCh 114) (Erythrobacter sp. (strain OCh 114)) protein is Bifunctional protein FolD 3.